Here is a 473-residue protein sequence, read N- to C-terminus: Biotin-dependent acetyl-/propionyl-coenzyme A carboxylase beta6 subunit (473 aa).

Positions Met1–Glu224 constitute a CoA carboxyltransferase N-terminal domain. Positions Ala225–Leu473 constitute a CoA carboxyltransferase C-terminal domain.

This sequence belongs to the AccD/PCCB family. The biotin-dependent acyl-CoA carboxylase complex is composed of AccA3, which contains the biotin carboxylase (BC) and biotin carboxyl carrier protein (BCCP) domains, and AccD6, which contains the carboxyl transferase (CT) domain.

It catalyses the reaction N(6)-carboxybiotinyl-L-lysyl-[protein] + acetyl-CoA = N(6)-biotinyl-L-lysyl-[protein] + malonyl-CoA. It carries out the reaction N(6)-carboxybiotinyl-L-lysyl-[protein] + propanoyl-CoA = methylmalonyl-CoA + N(6)-biotinyl-L-lysyl-[protein]. It functions in the pathway lipid metabolism; fatty acid biosynthesis. It participates in lipid metabolism; mycolic acid biosynthesis. Component of a biotin-dependent acyl-CoA carboxylase complex. This subunit transfers the CO2 from carboxybiotin to the CoA ester substrate. When associated with the alpha3 subunit AccA3, is involved in the carboxylation of acetyl-CoA and propionyl-CoA. This is Biotin-dependent acetyl-/propionyl-coenzyme A carboxylase beta6 subunit (accD6) from Mycobacterium bovis (strain ATCC BAA-935 / AF2122/97).